The primary structure comprises 730 residues: Hepatocyte growth factor (730 aa).

The N-terminal stretch at Met-1–Gly-31 is a signal peptide. Gln-32 bears the Pyrrolidone carboxylic acid mark. The PAN domain occupies Asn-37–Asp-123. Intrachain disulfides connect Cys-70–Cys-96, Cys-74–Cys-84, Cys-128–Cys-206, Cys-149–Cys-189, Cys-177–Cys-201, Cys-211–Cys-288, Cys-232–Cys-271, and Cys-260–Cys-283. 2 consecutive Kringle domains span residues Cys-128–Cys-206 and Cys-211–Cys-288. N-linked (GlcNAc...) asparagine glycosylation occurs at Asn-294. Cystine bridges form between Cys-305–Cys-383, Cys-326–Cys-365, Cys-354–Cys-377, Cys-391–Cys-469, Cys-412–Cys-452, Cys-440–Cys-464, Cys-487–Cys-606, Cys-519–Cys-535, Cys-614–Cys-681, Cys-644–Cys-660, and Cys-671–Cys-699. Kringle domains follow at residues Cys-305 to Cys-383 and Cys-391 to Cys-469. N-linked (GlcNAc...) asparagine glycosylation occurs at Asn-402. The Peptidase S1 domain occupies Val-495 to Leu-723. N-linked (GlcNAc...) asparagine glycosylation is found at Asn-568 and Asn-655.

It belongs to the peptidase S1 family. Plasminogen subfamily. In terms of assembly, dimer of an alpha chain and a beta chain linked by a disulfide bond. Interacts with SRPX2; the interaction increases HGF mitogenic activity. The single-chain precursor undergoes proteolytic processing by TMPRSS13 resulting in an active two-chain form. The single-chain precursor undergoes proteolytic processing by HGFAC resulting in an active two-chain form.

Its function is as follows. Potent mitogen for mature parenchymal hepatocyte cells, seems to be a hepatotrophic factor, and acts as a growth factor for a broad spectrum of tissues and cell types. Activating ligand for the receptor tyrosine kinase MET by binding to it and promoting its dimerization. Activates MAPK signaling following TMPRSS13 cleavage and activation. The chain is Hepatocyte growth factor (HGF) from Canis lupus familiaris (Dog).